We begin with the raw amino-acid sequence, 145 residues long: MKNMLHPQKYETHVLDDLMEFYEGVIGYPEIDLRLAGEEAWLKGVNPELAEAVKKIIKTIRRYLEGSPYDGSEKPIPRYIIAEIFSQIAPEVQLLVNALDTEGKYGFLKHIKKLNLNSLAMLSKNYNENDKLWKELENEGYVYLE.

Residues 110 to 123 (HIKKLNLNSLAMLS) are C-terminal tail, binds in the RNAP DNA-binding channel.

The protein belongs to the viral ORF131/RIP family. As to quaternary structure, interacts with host RNA polymerase (RNAP) subunits Rpo1N and Rpo2.

It localises to the virion. Functionally, plays a role in the inhibition of global transcription by interacting with the RNA polymerase (RNAP) clamp, locking it in a fixed position and inhibiting the formation and/or stability of the pre-initiation complex (PIC). Also overlaps with the transcription factor B binding site; overall RIP probably interferes with DNA loading onto RNAP but does not displace DNA once it is loaded. May play a role in virus particle assembly, possibly by dissociating active RNAP from the virus genome. The polypeptide is RNAP inhibitory protein (Acidianus two-tailed virus (ATV)).